Here is a 418-residue protein sequence, read N- to C-terminus: Vasopressin V1a receptor (418 aa).

Low complexity predominate over residues methionine 1–serine 15. The interval methionine 1 to leucine 20 is disordered. The Extracellular segment spans residues methionine 1–lysine 51. N-linked (GlcNAc...) asparagine glycans are attached at residues asparagine 13 and asparagine 26. Residues leucine 52–leucine 75 form a helical membrane-spanning segment. At histidine 76–leucine 87 the chain is on the cytoplasmic side. The helical transmembrane segment at phenylalanine 88–glycine 109 threads the bilayer. Residues tryptophan 110 to arginine 124 are Extracellular-facing. The cysteines at positions 123 and 202 are disulfide-linked. Residues valine 125–alanine 146 traverse the membrane as a helical segment. Residues aspartate 147 to arginine 167 are Cytoplasmic-facing. The helical transmembrane segment at leucine 168–serine 189 threads the bilayer. At methionine 190–threonine 217 the chain is on the extracellular side. Residue asparagine 195 is glycosylated (N-linked (GlcNAc...) asparagine). The helical transmembrane segment at tryptophan 218 to isoleucine 238 threads the bilayer. Residues cysteine 239–threonine 293 are Cytoplasmic-facing. A helical membrane pass occupies residues phenylalanine 294–tryptophan 313. Residues serine 314–alanine 331 are Extracellular-facing. A glycan (N-linked (GlcNAc...) asparagine) is linked at asparagine 319. Residues isoleucine 332–phenylalanine 351 traverse the membrane as a helical segment. Over serine 352–threonine 418 the chain is Cytoplasmic. Residues cysteine 365 and cysteine 366 are each lipidated (S-palmitoyl cysteine). Residues glycine 377–threonine 418 are disordered. Polar residues predominate over residues arginine 383–glycine 399. A Phosphoserine modification is found at serine 404.

The protein belongs to the G-protein coupled receptor 1 family. Vasopressin/oxytocin receptor subfamily.

The protein localises to the cell membrane. Its function is as follows. Receptor for arginine vasopressin. The activity of this receptor is mediated by G proteins which activate a phosphatidyl-inositol-calcium second messenger system. The polypeptide is Vasopressin V1a receptor (AVPR1A) (Ovis aries (Sheep)).